Reading from the N-terminus, the 156-residue chain is Small ribosomal subunit protein uS7 (156 aa).

It belongs to the universal ribosomal protein uS7 family. Part of the 30S ribosomal subunit. Contacts proteins S9 and S11.

In terms of biological role, one of the primary rRNA binding proteins, it binds directly to 16S rRNA where it nucleates assembly of the head domain of the 30S subunit. Is located at the subunit interface close to the decoding center, probably blocks exit of the E-site tRNA. This Methylocella silvestris (strain DSM 15510 / CIP 108128 / LMG 27833 / NCIMB 13906 / BL2) protein is Small ribosomal subunit protein uS7.